The chain runs to 318 residues: ATP phosphoribosyltransferase regulatory subunit (318 aa).

It belongs to the class-II aminoacyl-tRNA synthetase family. HisZ subfamily. Heteromultimer composed of HisG and HisZ subunits.

It localises to the cytoplasm. It functions in the pathway amino-acid biosynthesis; L-histidine biosynthesis; L-histidine from 5-phospho-alpha-D-ribose 1-diphosphate: step 1/9. Required for the first step of histidine biosynthesis. May allow the feedback regulation of ATP phosphoribosyltransferase activity by histidine. This Lactococcus lactis subsp. cremoris (strain SK11) protein is ATP phosphoribosyltransferase regulatory subunit.